We begin with the raw amino-acid sequence, 574 residues long: Septation ring formation regulator EzrA (574 aa).

The Extracellular portion of the chain corresponds to 1-7 (MSSGIIL). A helical membrane pass occupies residues 8–26 (LIVAIVLLVIIAYLIGVII). Residues 27-574 (RKRNDSMIGT…YERTREHIRF (548 aa)) are Cytoplasmic-facing. Coiled coils occupy residues 102-140 (NFIRAKHEINNVESQLNLVEEDITSIREALSILKEQEEK), 243-379 (RRLL…GQEI), and 459-520 (QLEA…SFEA).

Belongs to the EzrA family.

The protein resides in the cell membrane. In terms of biological role, negative regulator of FtsZ ring formation; modulates the frequency and position of FtsZ ring formation. Inhibits FtsZ ring formation at polar sites. Interacts either with FtsZ or with one of its binding partners to promote depolymerization. The protein is Septation ring formation regulator EzrA of Streptococcus uberis (strain ATCC BAA-854 / 0140J).